The following is a 541-amino-acid chain: Solute carrier family 2, facilitated glucose transporter member 10 (541 aa).

At 1–15 (MGHSPPVLPLCASVS) the chain is on the cytoplasmic side. A helical transmembrane segment spans residues 16–36 (LLGGLTFGYELAVISGALLPL). The Extracellular segment spans residues 37–48 (QLDFGLSCLEQE). Residues 49 to 69 (FLVGSLLLGALLASLVGGFLI) form a helical membrane-spanning segment. At 70-77 (DCYGRKQA) the chain is on the cytoplasmic side. A helical membrane pass occupies residues 78 to 98 (ILGSNLVLLAGSLTLGLAGSL). The Extracellular segment spans residues 99–106 (AWLVLGRA). The helical transmembrane segment at 107-127 (VVGFAISLSSMACCIYVSELV) threads the bilayer. Topologically, residues 128–134 (GPRQRGV) are cytoplasmic. A helical transmembrane segment spans residues 135–155 (LVSLYEAGITVGILLSYALNY). At 156-166 (ALAGTPWGWRH) the chain is on the extracellular side. Residues 167-187 (MFGWATAPAVLQSLSLLFLPA) form a helical membrane-spanning segment. At 188–233 (GTDETATHKDLIPLQGGEAPKLGPGRPRYSFLDLFRARDNMRGRTT) the chain is on the cytoplasmic side. Residues 234 to 254 (VGLGLVLFQQLTGQPNVLCYA) traverse the membrane as a helical segment. 242–243 (QQ) serves as a coordination point for D-glucose. Over 255–269 (STIFSSVGFHGGSSA) the chain is Extracellular. A helical transmembrane segment spans residues 270-290 (VLASVGLGAVKVAATLTAMGL). Over 291 to 298 (VDRAGRRA) the chain is Cytoplasmic. The chain crosses the membrane as a helical span at residues 299–319 (LLLAGCALMALSVSGIGLVSF). Residues 320–414 (AVPMDSGPSC…HALLRWTALL (95 aa)) are Extracellular-facing. N334 carries an N-linked (GlcNAc...) asparagine glycan. The disordered stretch occupies residues 340 to 388 (GLPGDSGLLQDSSLPPIPRTNEDQREPILSTAKKTKPHPRSGDPSAPPR). A helical membrane pass occupies residues 415–435 (CLMVFVSAFSFGFGPVTWLVL). W432 lines the D-glucose pocket. Residues 436-445 (SEIYPVEIRG) are Cytoplasmic-facing. A helical transmembrane segment spans residues 446–466 (RAFAFCNSFNWAANLFISLSF). The Extracellular portion of the chain corresponds to 467-476 (LDLIGTIGLS). The chain crosses the membrane as a helical span at residues 477-497 (WTFLLYGLTAVLGLGFIYLFV). At 498 to 541 (PETKGQSLAEIDQQFQKRRFTLSFGHRQNSTGIPYSRIEISAAS) the chain is on the cytoplasmic side.

This sequence belongs to the major facilitator superfamily. Sugar transporter (TC 2.A.1.1) family. Glucose transporter subfamily. As to expression, widely expressed; highest levels in liver and pancreas.

It localises to the endomembrane system. The protein localises to the cytoplasm. The protein resides in the perinuclear region. The enzyme catalyses D-glucose(out) = D-glucose(in). Functionally, facilitative glucose transporter required for the development of the cardiovascular system. The sequence is that of Solute carrier family 2, facilitated glucose transporter member 10 from Homo sapiens (Human).